Here is a 30-residue protein sequence, read N- to C-terminus: Urease subunit alpha (30 aa).

Belongs to the metallo-dependent hydrolases superfamily. Urease alpha subunit family. As to quaternary structure, heterotrimer of UreA (gamma), UreB (beta) and UreC (alpha) subunits. Three heterotrimers associate to form the active enzyme. It depends on Ni cation as a cofactor.

It localises to the cytoplasm. The catalysed reaction is urea + 2 H2O + H(+) = hydrogencarbonate + 2 NH4(+). It functions in the pathway nitrogen metabolism; urea degradation; CO(2) and NH(3) from urea (urease route): step 1/1. The polypeptide is Urease subunit alpha (ureC) (Escherichia coli).